A 148-amino-acid polypeptide reads, in one-letter code: Histone H2B.1 (148 aa).

Positions 1 to 35 are enriched in basic and acidic residues; sequence MAPRAEKKPAEKKTAAERPVEENKAAEKAPAEKKP. The tract at residues 1–56 is disordered; it reads MAPRAEKKPAEKKTAAERPVEENKAAEKAPAEKKPKAGKKLPPKEAGDKKKKRSKK. A2 is modified (n,N,N-trimethylalanine; alternate). The residue at position 2 (A2) is a N,N-dimethylalanine; alternate. Position 2 is an N-methylalanine; alternate (A2). An N6-acetyllysine; partial modification is found at K7. K12 bears the N6-acetyllysine mark. An N6,N6-dimethyllysine modification is found at K13. N6-acetyllysine occurs at positions 28, 33, and 39. K40 is subject to N6-acetyllysine; partial. K144 participates in a covalent cross-link: Glycyl lysine isopeptide (Lys-Gly) (interchain with G-Cter in ubiquitin).

Belongs to the histone H2B family. The nucleosome is a histone octamer containing two molecules each of H2A, H2B, H3 and H4 assembled in one H3-H4 heterotetramer and two H2A-H2B heterodimers. The octamer wraps approximately 147 bp of DNA. Interacts with AHL27. Can be acetylated to form H2BK6ac, H2BK33ac and H2BK34ac. Post-translationally, mono-, di- or trimethylated at the N-terminus to form H2BA1me1/2/3. H2BA1me2 may be acetylated to form H2BA1me2K6ac. In terms of processing, monoubiquitinated by BRE1 to form H2BK143ub1 and deubiquitinated by UBP26. Required for heterochromatic histone H3 di- and trimethylation at H3K4me. May give a specific tag for epigenetic transcriptional activation.

The protein resides in the nucleus. It localises to the chromosome. Core component of nucleosome. Nucleosomes wrap and compact DNA into chromatin, limiting DNA accessibility to the cellular machineries which require DNA as a template. Histones thereby play a central role in transcription regulation, DNA repair, DNA replication and chromosomal stability. DNA accessibility is regulated via a complex set of post-translational modifications of histones, also called histone code, and nucleosome remodeling. This chain is Histone H2B.1, found in Arabidopsis thaliana (Mouse-ear cress).